Reading from the N-terminus, the 71-residue chain is Small ribosomal subunit protein bS21 (71 aa).

It belongs to the bacterial ribosomal protein bS21 family.

In Shewanella sp. (strain MR-4), this protein is Small ribosomal subunit protein bS21.